Consider the following 393-residue polypeptide: Formate-dependent phosphoribosylglycinamide formyltransferase (393 aa).

N(1)-(5-phospho-beta-D-ribosyl)glycinamide-binding positions include 17–18 and Glu77; that span reads EL. Residues Arg109, Lys150, 155 to 160, 190 to 193, and Glu198 contribute to the ATP site; these read SSGKGQ and EEFL. An ATP-grasp domain is found at 114–304; it reads DLAAGELGLR…EFELHLRAVL (191 aa). Positions 263 and 275 each coordinate Mg(2+). Residues Asp282, Lys354, and 361–362 contribute to the N(1)-(5-phospho-beta-D-ribosyl)glycinamide site; that span reads RR.

The protein belongs to the PurK/PurT family. In terms of assembly, homodimer.

The enzyme catalyses N(1)-(5-phospho-beta-D-ribosyl)glycinamide + formate + ATP = N(2)-formyl-N(1)-(5-phospho-beta-D-ribosyl)glycinamide + ADP + phosphate + H(+). It functions in the pathway purine metabolism; IMP biosynthesis via de novo pathway; N(2)-formyl-N(1)-(5-phospho-D-ribosyl)glycinamide from N(1)-(5-phospho-D-ribosyl)glycinamide (formate route): step 1/1. In terms of biological role, involved in the de novo purine biosynthesis. Catalyzes the transfer of formate to 5-phospho-ribosyl-glycinamide (GAR), producing 5-phospho-ribosyl-N-formylglycinamide (FGAR). Formate is provided by PurU via hydrolysis of 10-formyl-tetrahydrofolate. In Synechococcus sp. (strain RCC307), this protein is Formate-dependent phosphoribosylglycinamide formyltransferase.